A 372-amino-acid chain; its full sequence is Serine/threonine-protein kinase 17B (372 aa).

Positions 33–293 (ILTSKELGRG…AEICLSHSWL (261 aa)) constitute a Protein kinase domain. ATP is bound by residues 39–47 (LGRGKFAVV) and K62. Catalysis depends on D158, which acts as the Proton acceptor. Positions 305 to 362 (EETSSSSQTQDHSVRSSEDKTSKSSCNGTCGDREDKENIPEDSSMVSKRFRFDDSLPN) are disordered. Basic and acidic residues predominate over residues 316-326 (HSVRSSEDKTS).

This sequence belongs to the protein kinase superfamily. CAMK Ser/Thr protein kinase family. DAP kinase subfamily. Interacts with CHP1; the interaction induces CHP1 to translocate from the Golgi to the nucleus. In terms of processing, autophosphorylated. As to expression, highly expressed in placenta, lung, pancreas. Lower levels in heart, brain, liver, skeletal muscle and kidney.

The protein localises to the nucleus. Its subcellular location is the cell membrane. It is found in the endoplasmic reticulum-Golgi intermediate compartment. The catalysed reaction is L-seryl-[protein] + ATP = O-phospho-L-seryl-[protein] + ADP + H(+). It carries out the reaction L-threonyl-[protein] + ATP = O-phospho-L-threonyl-[protein] + ADP + H(+). In terms of biological role, phosphorylates myosin light chains. Acts as a positive regulator of apoptosis. The polypeptide is Serine/threonine-protein kinase 17B (STK17B) (Homo sapiens (Human)).